Here is a 165-residue protein sequence, read N- to C-terminus: Protein SprT (165 aa).

One can recognise a SprT-like domain in the interval 20–163; sequence EKLTQANLKL…RCVHCGEQLV (144 aa). His-78 contacts Zn(2+). Residue Glu-79 is part of the active site. A Zn(2+)-binding site is contributed by His-82.

Belongs to the SprT family. Zn(2+) is required as a cofactor.

The protein localises to the cytoplasm. The polypeptide is Protein SprT (Escherichia coli O139:H28 (strain E24377A / ETEC)).